Reading from the N-terminus, the 61-residue chain is uncharacterized protein (61 aa).

The tract at residues 23–61 (VPTKWQDYKKPGPNQKYTSDGKKRRRIRRSQKSILGVRS) is disordered. The segment covering 44-53 (KKRRRIRRSQ) has biased composition (basic residues).

This is an uncharacterized protein from Archaeoglobus fulgidus (strain ATCC 49558 / DSM 4304 / JCM 9628 / NBRC 100126 / VC-16).